We begin with the raw amino-acid sequence, 257 residues long: NAD-capped RNA hydrolase NudC (257 aa).

Position 69 (R69) interacts with substrate. Zn(2+) is bound by residues C98 and C101. E111 provides a ligand contact to substrate. The Zn(2+) site is built by C116 and C119. Y124 provides a ligand contact to substrate. The Nudix hydrolase domain occupies 125–248 (PQIAPCIIVA…TVARRLIEDT (124 aa)). 3 residues coordinate a divalent metal cation: A158, E174, and E178. A Nudix box motif is present at residues 159 to 180 (GFVEVGETLEQAVAREVMEESG). Residue 192-199 (QPWPFPQS) participates in substrate binding. A divalent metal cation is bound at residue E219. A241 serves as a coordination point for substrate.

The protein belongs to the Nudix hydrolase family. NudC subfamily. Homodimer. Mg(2+) is required as a cofactor. The cofactor is Mn(2+). Zn(2+) serves as cofactor.

The catalysed reaction is a 5'-end NAD(+)-phospho-ribonucleoside in mRNA + H2O = a 5'-end phospho-adenosine-phospho-ribonucleoside in mRNA + beta-nicotinamide D-ribonucleotide + 2 H(+). It carries out the reaction NAD(+) + H2O = beta-nicotinamide D-ribonucleotide + AMP + 2 H(+). The enzyme catalyses NADH + H2O = reduced beta-nicotinamide D-ribonucleotide + AMP + 2 H(+). MRNA decapping enzyme that specifically removes the nicotinamide adenine dinucleotide (NAD) cap from a subset of mRNAs by hydrolyzing the diphosphate linkage to produce nicotinamide mononucleotide (NMN) and 5' monophosphate mRNA. The NAD-cap is present at the 5'-end of some mRNAs and stabilizes RNA against 5'-processing. Has preference for mRNAs with a 5'-end purine. Catalyzes the hydrolysis of a broad range of dinucleotide pyrophosphates. This Salmonella heidelberg (strain SL476) protein is NAD-capped RNA hydrolase NudC.